The chain runs to 324 residues: Beta-ketoacyl-[acyl-carrier-protein] synthase III (324 aa).

Active-site residues include Cys-112 and His-249. The segment at 250 to 254 (QANRR) is ACP-binding. Asn-279 is an active-site residue.

This sequence belongs to the thiolase-like superfamily. FabH family. As to quaternary structure, homodimer.

Its subcellular location is the cytoplasm. The enzyme catalyses malonyl-[ACP] + acetyl-CoA + H(+) = 3-oxobutanoyl-[ACP] + CO2 + CoA. Its pathway is lipid metabolism; fatty acid biosynthesis. Its function is as follows. Catalyzes the condensation reaction of fatty acid synthesis by the addition to an acyl acceptor of two carbons from malonyl-ACP. Catalyzes the first condensation reaction which initiates fatty acid synthesis and may therefore play a role in governing the total rate of fatty acid production. Possesses both acetoacetyl-ACP synthase and acetyl transacylase activities. Its substrate specificity determines the biosynthesis of branched-chain and/or straight-chain of fatty acids. In Streptococcus pyogenes serotype M3 (strain ATCC BAA-595 / MGAS315), this protein is Beta-ketoacyl-[acyl-carrier-protein] synthase III.